A 578-amino-acid polypeptide reads, in one-letter code: Thiol:disulfide interchange protein DsbD (578 aa).

Residues 1-24 (MAQRFITLILLLCSILLAPHSAQA) form the signal peptide. Disulfide bonds link cysteine 134–cysteine 140 and cysteine 195–cysteine 317. A run of 9 helical transmembrane segments spans residues 183 to 203 (ALLIGIGIAFTPCVLPMYPLI), 219 to 239 (ILLLAIVYVQGMALTYTLLGL), 256 to 276 (YVLIGLSALFVLLALSMFGLY), 297 to 317 (GGSLAGVFAMGALAGLICSPC), 318 to 338 (TTAPLSAILLYIAQSGNMLAG), 339 to 359 (GGTLYLYALGMGIPLVIVTLF), 370 to 390 (WMQYVKEAFGFVILALPVFLL), 397 to 417 (VWGLRLWSLLAIAFFGWAFIL), and 421 to 441 (AHSGWARAFQLLLLAALLIAA). The Thioredoxin domain maps to 438–578 (LIAARPLQDW…FLQHLQNLPR (141 aa)). A disulfide bridge connects residues cysteine 493 and cysteine 496.

It belongs to the thioredoxin family. DsbD subfamily.

The protein resides in the cell inner membrane. It carries out the reaction [protein]-dithiol + NAD(+) = [protein]-disulfide + NADH + H(+). The catalysed reaction is [protein]-dithiol + NADP(+) = [protein]-disulfide + NADPH + H(+). Required to facilitate the formation of correct disulfide bonds in some periplasmic proteins and for the assembly of the periplasmic c-type cytochromes. Acts by transferring electrons from cytoplasmic thioredoxin to the periplasm. This transfer involves a cascade of disulfide bond formation and reduction steps. This is Thiol:disulfide interchange protein DsbD from Yersinia enterocolitica serotype O:8 / biotype 1B (strain NCTC 13174 / 8081).